The following is a 529-amino-acid chain: Na(+)/H(+) antiporter NhaB (529 aa).

The next 12 membrane-spanning stretches (helical) occupy residues 13–33, 34–54, 90–110, 113–133, 136–156, 205–225, 241–261, 306–326, 327–347, 351–371, 451–471, and 479–499; these read FLGKAPDWYKVAIISFLIINP, IVFFFVDPFVAGWLLVVEFIF, LVANIEVLLLLVFMVAGIYFM, LLLFIFTKILLGIRSKAILSL, CFAAAFLSAFLDALTVIAVVI, LLMHAGVGTALGGVTTMVGEP, FLIRMAPVTLPVFVCGLLTCF, GLIAVWLIVGLALHLAAVGLI, GLSVIILATAFTGVIEEHSLG, EEALPFTALLAVFFSIVAVII, ATPNGQAAFLFLLTSALAPLI, and VIMALPYTIVLALVGLFGIVF.

The protein belongs to the NhaB Na(+)/H(+) (TC 2.A.34) antiporter family.

It localises to the cell inner membrane. The enzyme catalyses 2 Na(+)(in) + 3 H(+)(out) = 2 Na(+)(out) + 3 H(+)(in). Na(+)/H(+) antiporter that extrudes sodium in exchange for external protons. The protein is Na(+)/H(+) antiporter NhaB of Vibrio vulnificus (strain CMCP6).